A 582-amino-acid polypeptide reads, in one-letter code: Guanine nucleotide-binding protein-like NSN1 (582 aa).

The span at 1 to 46 (MVKRSKKSKSKRVTLKQKHKVLKKVKEHHKKKAKDAKKLGLHRKPR) shows a compositional bias: basic residues. Positions 1–58 (MVKRSKKSKSKRVTLKQKHKVLKKVKEHHKKKAKDAKKLGLHRKPRVEKDPGIPNDWP) are disordered. Residues 2–49 (VKRSKKSKSKRVTLKQKHKVLKKVKEHHKKKAKDAKKLGLHRKPRVEK) are basic. Short sequence motifs (nuclear localization signal) lie at residues 5–12 (SKKSKSKR), 22–29 (LKKVKEHH), and 69–76 (VRRARALE). Residues 15 to 94 (LKQKHKVLKK…RKERAKKRKL (80 aa)) are a coiled coil. A CP-type G domain is found at 127 to 311 (YKELVKVIEL…LLDCPGVVML (185 aa)). The DARXP motif signature appears at 145-149 (DARDP). Residues 175–178 (NKID) are G4. 175 to 178 (NKID) is a GTP binding site. The segment at 202 to 204 (KCS) is G5. The G1 stretch occupies residues 260 to 267 (GLPNVGKS). Residue 263–268 (NVGKSS) participates in GTP binding. Residues 281–456 (VGATPGLTRS…NEFNPVIIPS (176 aa)) are intermediate. A G2 region spans residues 286-290 (GLTRS). GTP is bound by residues 304–307 (DCPG) and Gly-307. Positions 304–307 (DCPG) are G3. The tract at residues 463–551 (DETMIEDESK…EEDLMDGDYD (89 aa)) is acidic. The segment at 469–545 (DESKTQTEEE…KKAGADEEDL (77 aa)) is disordered. Over residues 476-496 (EEEAEHESDDDESMGGEEEEE) the composition is skewed to acidic residues. Residues 497–506 (AGKTKEKSET) are compositionally biased toward basic and acidic residues. Residues 515–537 (AAESMLNTKKQKAEKKKRKKAKK) are a coiled coil. A Nuclear localization signal 4 motif is present at residues 522 to 529 (TKKQKAEK). Over residues 523 to 537 (KKQKAEKKKRKKAKK) the composition is skewed to basic residues.

It belongs to the TRAFAC class YlqF/YawG GTPase family. Interacts with EBP2 and PES. As to expression, mostly expressed in flowers, siliques and inflorescence apex, and, to a lower extent, in stems and leaves.

The protein localises to the nucleus. Its subcellular location is the nucleolus. In terms of biological role, involved in the differentiation of epidermal cells, probably via the regulation of the expression of meristem-related genes (e.g. CLV3, STM, KNAT1, CUC2 and AG) and of leaf polarity-related genes (e.g. YAB5, FIL, AS2, PHB and PHV). May play a role in regulating cellular proliferation. Necessary for flower development, probably by preventing apical dominance through the down-regulation of AG expression. Required for embryogenesis, leaf and cotyledon development, as well as for leaf polarity establishment. Plays an important role in plant growth and senescence by modulating ribosome biogenesis in nucleolus. Possesses GTPAse activity in vitro. Possesses RNA binding activity in vitro. Associates with ribosomes. This chain is Guanine nucleotide-binding protein-like NSN1, found in Arabidopsis thaliana (Mouse-ear cress).